A 151-amino-acid polypeptide reads, in one-letter code: Ribosome maturation factor RimP (151 aa).

It belongs to the RimP family.

It is found in the cytoplasm. Functionally, required for maturation of 30S ribosomal subunits. The protein is Ribosome maturation factor RimP of Mannheimia succiniciproducens (strain KCTC 0769BP / MBEL55E).